The chain runs to 378 residues: Histidinol-phosphate aminotransferase 2 (378 aa).

N6-(pyridoxal phosphate)lysine is present on lysine 240.

The protein belongs to the class-II pyridoxal-phosphate-dependent aminotransferase family. Histidinol-phosphate aminotransferase subfamily. Homodimer. The cofactor is pyridoxal 5'-phosphate.

The catalysed reaction is L-histidinol phosphate + 2-oxoglutarate = 3-(imidazol-4-yl)-2-oxopropyl phosphate + L-glutamate. It participates in amino-acid biosynthesis; L-histidine biosynthesis; L-histidine from 5-phospho-alpha-D-ribose 1-diphosphate: step 7/9. The chain is Histidinol-phosphate aminotransferase 2 (hisC2) from Caulobacter vibrioides (strain ATCC 19089 / CIP 103742 / CB 15) (Caulobacter crescentus).